Consider the following 453-residue polypeptide: Histidine--tRNA ligase (453 aa).

Belongs to the class-II aminoacyl-tRNA synthetase family. As to quaternary structure, homodimer.

The protein resides in the cytoplasm. The catalysed reaction is tRNA(His) + L-histidine + ATP = L-histidyl-tRNA(His) + AMP + diphosphate + H(+). The polypeptide is Histidine--tRNA ligase (Cytophaga hutchinsonii (strain ATCC 33406 / DSM 1761 / CIP 103989 / NBRC 15051 / NCIMB 9469 / D465)).